Consider the following 83-residue polypeptide: NAD(P)H-quinone oxidoreductase subunit L (83 aa).

2 helical membrane passes run Leu15–Leu35 and Leu53–Leu73.

It belongs to the complex I NdhL subunit family. NDH-1 can be composed of about 15 different subunits; different subcomplexes with different compositions have been identified which probably have different functions.

It is found in the cellular thylakoid membrane. It catalyses the reaction a plastoquinone + NADH + (n+1) H(+)(in) = a plastoquinol + NAD(+) + n H(+)(out). It carries out the reaction a plastoquinone + NADPH + (n+1) H(+)(in) = a plastoquinol + NADP(+) + n H(+)(out). In terms of biological role, NDH-1 shuttles electrons from an unknown electron donor, via FMN and iron-sulfur (Fe-S) centers, to quinones in the respiratory and/or the photosynthetic chain. The immediate electron acceptor for the enzyme in this species is believed to be plastoquinone. Couples the redox reaction to proton translocation, and thus conserves the redox energy in a proton gradient. Cyanobacterial NDH-1 also plays a role in inorganic carbon-concentration. This Prochlorococcus marinus (strain MIT 9303) protein is NAD(P)H-quinone oxidoreductase subunit L.